Consider the following 155-residue polypeptide: Ferredoxin-6, chloroplastic (155 aa).

The transit peptide at M1 to A58 directs the protein to the chloroplast. The 2Fe-2S ferredoxin-type domain maps to H61–E152. The [2Fe-2S] cluster site is built by C98, C103, C106, and C136.

It belongs to the 2Fe2S plant-type ferredoxin family. Requires [2Fe-2S] cluster as cofactor.

It localises to the plastid. The protein localises to the chloroplast. Ferredoxins are iron-sulfur proteins that transfer electrons in a wide variety of metabolic reactions. The polypeptide is Ferredoxin-6, chloroplastic (FDX6) (Zea mays (Maize)).